The following is a 349-amino-acid chain: Isopentenyl-diphosphate delta-isomerase (349 aa).

6-7 (RK) serves as a coordination point for substrate. FMN-binding positions include 62–64 (AMT), serine 93, and asparagine 122. Glutamine 152 provides a ligand contact to substrate. Glutamate 153 contacts Mg(2+). FMN-binding positions include lysine 184, threonine 214, 258-259 (GG), and 280-281 (AG).

This sequence belongs to the IPP isomerase type 2 family. In terms of assembly, homooctamer. Dimer of tetramers. It depends on FMN as a cofactor. Requires NADPH as cofactor. The cofactor is Mg(2+).

The protein localises to the cytoplasm. The catalysed reaction is isopentenyl diphosphate = dimethylallyl diphosphate. Functionally, involved in the biosynthesis of isoprenoids. Catalyzes the 1,3-allylic rearrangement of the homoallylic substrate isopentenyl (IPP) to its allylic isomer, dimethylallyl diphosphate (DMAPP). The sequence is that of Isopentenyl-diphosphate delta-isomerase from Bacillus cereus (strain ATCC 10987 / NRS 248).